A 25-amino-acid chain; its full sequence is Oxyopinin-3c (25 aa).

Expressed by the venom gland.

The protein resides in the secreted. May have cytolytic and antimicrobial activity. The polypeptide is Oxyopinin-3c (Oxyopes takobius (Lynx spider)).